We begin with the raw amino-acid sequence, 197 residues long: HTH-type transcriptional repressor BdcR (197 aa).

In terms of domain architecture, HTH tetR-type spans 15 to 75 (RFAPEQAISA…RVLNEYVGTE (61 aa)). The segment at residues 38 to 57 (SVAEVTDYLGINPPSLYAAF) is a DNA-binding region (H-T-H motif).

Its function is as follows. Negatively regulates expression of bdcA. The protein is HTH-type transcriptional repressor BdcR (bdcR) of Escherichia coli (strain K12).